A 1487-amino-acid polypeptide reads, in one-letter code: Major viral transcription factor (1487 aa).

Disordered stretches follow at residues 41-295, 310-371, 409-442, and 803-1007; these read AAPD…LPPG, LAKT…EEAP, REPL…SRDG, and PPTR…HTPR. The span at 66–75 shows a compositional bias: pro residues; sequence VIPPPSPAPE. Composition is skewed to low complexity over residues 165-193 and 201-213; these read PSSA…SSSS and DGAG…SSSS. Over residues 214-224 the composition is skewed to acidic residues; it reads DDSDSDEGGEE. A compositionally biased stretch (low complexity) spans 235-272; the sequence is AAKTPSAAGSPGPSSGGDRPAAGAATPKSCRSGAASPG. Over residues 273–285 the composition is skewed to pro residues; that stretch reads APAPAPASAPAPS. Composition is skewed to low complexity over residues 807–829, 849–860, and 867–877; these read SQQP…AEGS, PSSHSQSPQHSQ, and ATTATCCRATQ. Residues 878–893 show a composition bias toward polar residues; sequence TNARSRGQQHQPQKAR. The segment covering 920 to 929 has biased composition (basic residues); that stretch reads HGRPRGKSGK. Residues 938–951 are compositionally biased toward low complexity; the sequence is AAQAGASASFSSSA. The span at 988-1007 shows a compositional bias: basic and acidic residues; sequence GPDRRGGFRRVPRGDCHTPR.

Belongs to the herpesviridae ICP4 family. In terms of processing, a long stretch of serine residues may be a major site of phosphorylation.

It is found in the host nucleus. This IE protein is a multifunctional protein capable of migrating to the nucleus, binding to DNA, trans-activating other viral genes, and autoregulating its own synthesis. The chain is Major viral transcription factor (IE) from Equine herpesvirus 1 (strain Kentucky A) (EHV-1).